We begin with the raw amino-acid sequence, 138 residues long: Chorion protein S16 (138 aa).

A signal peptide spans 1 to 20 (MSATLRLLCLMACCVALAVA).

Belongs to the chorion protein S16 family.

Its subcellular location is the secreted. In terms of biological role, chorion membrane (egg shell) protein; plays a role in protecting the egg from the environment. This Drosophila melanogaster (Fruit fly) protein is Chorion protein S16 (Cp16).